Here is a 561-residue protein sequence, read N- to C-terminus: Lysine--tRNA ligase (561 aa).

Mg(2+) is bound by residues E409 and E416.

It belongs to the class-II aminoacyl-tRNA synthetase family. Homodimer. The cofactor is Mg(2+).

It localises to the cytoplasm. It carries out the reaction tRNA(Lys) + L-lysine + ATP = L-lysyl-tRNA(Lys) + AMP + diphosphate. In Trichormus variabilis (strain ATCC 29413 / PCC 7937) (Anabaena variabilis), this protein is Lysine--tRNA ligase.